The primary structure comprises 45 residues: DNA-directed RNA polymerase subunit Rpo12 (45 aa).

Zn(2+) is bound by residues cysteine 8, cysteine 23, and cysteine 26.

Belongs to the archaeal Rpo12/eukaryotic RPC10 RNA polymerase subunit family. As to quaternary structure, part of the RNA polymerase complex. Zn(2+) serves as cofactor.

The protein localises to the cytoplasm. It catalyses the reaction RNA(n) + a ribonucleoside 5'-triphosphate = RNA(n+1) + diphosphate. Its function is as follows. DNA-dependent RNA polymerase (RNAP) catalyzes the transcription of DNA into RNA using the four ribonucleoside triphosphates as substrates. The protein is DNA-directed RNA polymerase subunit Rpo12 of Methanocella arvoryzae (strain DSM 22066 / NBRC 105507 / MRE50).